Here is a 105-residue protein sequence, read N- to C-terminus: Large ribosomal subunit protein bL21 (105 aa).

The protein belongs to the bacterial ribosomal protein bL21 family. Part of the 50S ribosomal subunit. Contacts protein L20.

Its function is as follows. This protein binds to 23S rRNA in the presence of protein L20. This is Large ribosomal subunit protein bL21 from Methylobacterium sp. (strain 4-46).